Reading from the N-terminus, the 519-residue chain is Probable U3 small nucleolar RNA-associated protein 18 (519 aa).

WD repeat units follow at residues 26–66 (DKEN…MFDT), 71–111 (GAKD…RLMI), 216–254 (SHSG…NPLV), 259–298 (LRSS…VQKV), 306–345 (NFQP…FATS), 347–386 (KIEG…VVRR), 390–429 (QDGV…ADAA), 438–479 (NITF…VFRN), and 485–519 (TPLG…AHYD).

The protein belongs to the WD repeat UTP18 family. In terms of assembly, component of the ribosomal small subunit (SSU) processome.

Its subcellular location is the nucleus. The protein localises to the nucleolus. In terms of biological role, involved in nucleolar processing of pre-18S ribosomal RNA. This chain is Probable U3 small nucleolar RNA-associated protein 18, found in Schizosaccharomyces pombe (strain 972 / ATCC 24843) (Fission yeast).